Here is a 195-residue protein sequence, read N- to C-terminus: Imidazoleglycerol-phosphate dehydratase (195 aa).

It belongs to the imidazoleglycerol-phosphate dehydratase family.

The protein resides in the cytoplasm. The catalysed reaction is D-erythro-1-(imidazol-4-yl)glycerol 3-phosphate = 3-(imidazol-4-yl)-2-oxopropyl phosphate + H2O. It participates in amino-acid biosynthesis; L-histidine biosynthesis; L-histidine from 5-phospho-alpha-D-ribose 1-diphosphate: step 6/9. This chain is Imidazoleglycerol-phosphate dehydratase, found in Geobacter metallireducens (strain ATCC 53774 / DSM 7210 / GS-15).